The chain runs to 984 residues: G patch domain-containing protein TGH homolog (984 aa).

The span at 130 to 144 (EHARKQASKEQKERP) shows a compositional bias: basic and acidic residues. A disordered region spans residues 130–153 (EHARKQASKEQKERPSAIPGPIPD). The region spanning 160 to 202 (TTSIGVKLLMKMGWRQGRSIRDAHADSLYESRREARKAFLALS) is the G-patch domain. The stretch at 408–450 (LIEGCAAMVARCGKHIEDFYKEKSKTNTQFNFLNEGDGCSYYA) is one SURP motif repeat. 4 disordered regions span residues 464–503 (QKPD…SSFP), 679–717 (TRTN…ESSS), 775–806 (LGLD…GISR), and 820–984 (ESAL…HHKR). The segment covering 473–495 (SSDKLTAENRGKILGERPLDRST) has biased composition (basic and acidic residues). The span at 679-695 (TRTNEVESSSIAPQHTS) shows a compositional bias: polar residues. Positions 697–709 (AGATETEAKGAAT) are enriched in low complexity. Residues 814–859 (QEIKENESALDKEEIANASADVPSDNVEELGLKYEKQEHRAEKSRS) adopt a coiled-coil conformation. Residues 843-858 (LGLKYEKQEHRAEKSR) are compositionally biased toward basic and acidic residues. Basic residues-rich tracts occupy residues 882–892 (SRERRSRHKIR), 905–922 (HRSK…RRSR), and 934–946 (TKRK…HHRT). The span at 947-974 (RNPDTDSSDHEYEERHKSSSRRSSDKDR) shows a compositional bias: basic and acidic residues. Residues 975-984 (SRRRSRHHKR) are compositionally biased toward basic residues.

Its subcellular location is the nucleus. In terms of biological role, functions as a component of microRNA (miRNA) and small interfering RNA (siRNA) biogenesis. May assist Dicer-like (DCL) proteins to efficiently process and/or recruit the precursors of miRNAs and siRNAs. This Oryza sativa subsp. japonica (Rice) protein is G patch domain-containing protein TGH homolog.